Consider the following 625-residue polypeptide: Phosphomethylpyrimidine synthase (625 aa).

Substrate is bound by residues Asn231, Met260, Tyr289, His325, 345 to 347 (SRG), 386 to 389 (DGLR), and Glu425. His429 is a Zn(2+) binding site. Substrate is bound at residue Tyr452. Position 493 (His493) interacts with Zn(2+). 3 residues coordinate [4Fe-4S] cluster: Cys573, Cys576, and Cys581.

Belongs to the ThiC family. In terms of assembly, homodimer. The cofactor is [4Fe-4S] cluster.

The catalysed reaction is 5-amino-1-(5-phospho-beta-D-ribosyl)imidazole + S-adenosyl-L-methionine = 4-amino-2-methyl-5-(phosphooxymethyl)pyrimidine + CO + 5'-deoxyadenosine + formate + L-methionine + 3 H(+). It participates in cofactor biosynthesis; thiamine diphosphate biosynthesis. Its function is as follows. Catalyzes the synthesis of the hydroxymethylpyrimidine phosphate (HMP-P) moiety of thiamine from aminoimidazole ribotide (AIR) in a radical S-adenosyl-L-methionine (SAM)-dependent reaction. The sequence is that of Phosphomethylpyrimidine synthase from Acinetobacter baumannii (strain SDF).